A 324-amino-acid chain; its full sequence is Tetrachlorobenzoquinone reductase (324 aa).

The region spanning 5–107 (VSTIDMTVTQ…VPPANNFALV (103 aa)) is the FAD-binding FR-type domain. The 87-residue stretch at 238 to 324 (FTVVLARRSG…SKSPRLVLDI (87 aa)) folds into the 2Fe-2S ferredoxin-type domain. Residues Cys273, Cys278, Cys281, and Cys311 each coordinate [2Fe-2S] cluster.

This sequence belongs to the PDR/VanB family. As to quaternary structure, homotrimer. It depends on FMN as a cofactor. [2Fe-2S] cluster is required as a cofactor.

It carries out the reaction 2,3,5,6-tetrachlorohydroquinone + NAD(+) + H(+) = 2,3,5,6-tetrachloro-1,4-benzoquinone + NADH. The protein operates within xenobiotic degradation; pentachlorophenol degradation. In vitro, activated by tetrachlorohydroquinone (TCHQ) at low concentrations and inhibited at high concentrations (above 200 uM). However, PcpD would only be stimulated by tetrachlorohydroquinone (TCHQ) under in vivo conditions due to the toxicity of tetrachlorohydroquinone (TCHQ). Competitively inhibited by pentachlorophenol (PCP) in a concentration-dependent manner. PcpD is regulated by tetrachlorohydroquinone (TCHQ) and pentachlorophenol (PCP) using a mechanism, which maintains tetrachlorobenzoquinone at a level that would neither significantly decrease the biodegradation of pentachlorophenol (PCP) nor cause cytotoxicity in cells. In terms of biological role, involved in the degradation of the xenobiocide pentachlorophenol (PCP). Catalyzes the reduction of tetrachlorobenzoquinone (TCBQ) to yield tetrachlorohydroquinone (TCHQ). Also able to reduce 2,6-dichloroindophenol (DCIP). The sequence is that of Tetrachlorobenzoquinone reductase from Sphingobium chlorophenolicum.